The chain runs to 143 residues: Large ribosomal subunit protein uL11 (143 aa).

The protein belongs to the universal ribosomal protein uL11 family. As to quaternary structure, part of the ribosomal stalk of the 50S ribosomal subunit. Interacts with L10 and the large rRNA to form the base of the stalk. L10 forms an elongated spine to which L12 dimers bind in a sequential fashion forming a multimeric L10(L12)X complex. One or more lysine residues are methylated.

Functionally, forms part of the ribosomal stalk which helps the ribosome interact with GTP-bound translation factors. This Pseudomonas putida (strain ATCC 700007 / DSM 6899 / JCM 31910 / BCRC 17059 / LMG 24140 / F1) protein is Large ribosomal subunit protein uL11.